The following is a 223-amino-acid chain: N-terminal Xaa-Pro-Lys N-methyltransferase 1 (223 aa).

Residues Gly69, Arg74, Asp91 to Thr93, Leu119 to Gln120, and Gln135 each bind S-adenosyl-L-methionine.

The protein belongs to the methyltransferase superfamily. NTM1 family.

Its subcellular location is the nucleus. The enzyme catalyses N-terminal L-alanyl-L-prolyl-L-lysyl-[protein] + 3 S-adenosyl-L-methionine = N-terminal N,N,N-trimethyl-L-alanyl-L-prolyl-L-lysyl-[protein] + 3 S-adenosyl-L-homocysteine + 3 H(+). It carries out the reaction N-terminal L-seryl-L-prolyl-L-lysyl-[protein] + 3 S-adenosyl-L-methionine = N-terminal N,N,N-trimethyl-L-seryl-L-prolyl-L-lysyl-[protein] + 3 S-adenosyl-L-homocysteine + 3 H(+). It catalyses the reaction N-terminal L-prolyl-L-prolyl-L-lysyl-[protein] + 2 S-adenosyl-L-methionine = N-terminal N,N-dimethyl-L-prolyl-L-prolyl-L-lysyl-[protein] + 2 S-adenosyl-L-homocysteine + 2 H(+). Its function is as follows. Distributive alpha-N-methyltransferase that methylates the N-terminus of target proteins containing the N-terminal motif [Ala/Gly/Pro/Ser]-Pro-Lys when the initiator Met is cleaved. Specifically catalyzes mono-, di- or tri-methylation of the exposed alpha-amino group of the Ala, Gly or Ser residue in the [Ala/Gly/Ser]-Pro-Lys motif and mono- or di-methylation of Pro in the Pro-Pro-Lys motif. Required during mitosis for normal bipolar spindle formation and chromosome segregation via its action on target proteins. The sequence is that of N-terminal Xaa-Pro-Lys N-methyltransferase 1 (ntmt1) from Danio rerio (Zebrafish).